The following is a 321-amino-acid chain: Taste receptor type 2 member 135 (321 aa).

Over 1-28 the chain is Extracellular; sequence MGPIMSTGETSTAHTVLGCQITDKTVIT. A helical membrane pass occupies residues 29 to 49; it reads LFVILVFSCLVAVVGNGFIII. Over 50-75 the chain is Cytoplasmic; it reads ALGMKWLLRRTLSAHNKLLISLAASR. Residues 76-96 form a helical membrane-spanning segment; the sequence is FCLQCVVIGKNIYVFLNPSSF. Residues 97 to 106 are Extracellular-facing; it reads PYNPVIQLLN. The chain crosses the membrane as a helical span at residues 107 to 127; that stretch reads LMWDFLTAATIWFCSLLGFFY. Over 128–149 the chain is Cytoplasmic; the sequence is CVKIATLTHPVFVWLKYRLPGW. Residues 150–170 traverse the membrane as a helical segment; sequence VPWMLLSAVGMSSLTSILCFI. Residues 171-207 lie on the Extracellular side of the membrane; that stretch reads GNHMIYQNYARRGHQPWNATGNSLRHSLEKFYFISIK. Asn-188 carries an N-linked (GlcNAc...) asparagine glycan. A helical membrane pass occupies residues 208-228; sequence IIMWTVPTVIFSIFMSLLLVS. At 229–253 the chain is on the cytoplasmic side; sequence LVRHMKKTLLALSELRDVWAQAHFK. The helical transmembrane segment at 254 to 274 threads the bilayer; the sequence is ALLPLLSFIILFISCFLTLVL. Residues 275–286 lie on the Extracellular side of the membrane; it reads SSASSTPYQEFR. The chain crosses the membrane as a helical span at residues 287–307; the sequence is YWMWQVVIHLCTVIHPIVILL. Over 308 to 321 the chain is Cytoplasmic; it reads SNPVLRVVMKRGCC.

The protein belongs to the G-protein coupled receptor T2R family.

It localises to the membrane. In terms of biological role, putative taste receptor which may play a role in the perception of bitterness. The polypeptide is Taste receptor type 2 member 135 (Rattus norvegicus (Rat)).